The primary structure comprises 294 residues: 4-hydroxy-tetrahydrodipicolinate synthase (294 aa).

Residue threonine 48 coordinates pyruvate. Tyrosine 136 serves as the catalytic Proton donor/acceptor. Lysine 164 functions as the Schiff-base intermediate with substrate in the catalytic mechanism. Isoleucine 206 is a binding site for pyruvate.

Belongs to the DapA family. As to quaternary structure, homotetramer; dimer of dimers.

The protein resides in the cytoplasm. It catalyses the reaction L-aspartate 4-semialdehyde + pyruvate = (2S,4S)-4-hydroxy-2,3,4,5-tetrahydrodipicolinate + H2O + H(+). It participates in amino-acid biosynthesis; L-lysine biosynthesis via DAP pathway; (S)-tetrahydrodipicolinate from L-aspartate: step 3/4. Functionally, catalyzes the condensation of (S)-aspartate-beta-semialdehyde [(S)-ASA] and pyruvate to 4-hydroxy-tetrahydrodipicolinate (HTPA). The polypeptide is 4-hydroxy-tetrahydrodipicolinate synthase (Phenylobacterium zucineum (strain HLK1)).